The primary structure comprises 702 residues: Elongation factor G (702 aa).

One can recognise a tr-type G domain in the interval 8 to 290 (SRYRNIGISA…AIIEFLPAPN (283 aa)). GTP-binding positions include 17-24 (AHIDAGKT), 88-92 (DTPGH), and 142-145 (NKMD).

It belongs to the TRAFAC class translation factor GTPase superfamily. Classic translation factor GTPase family. EF-G/EF-2 subfamily.

The protein resides in the cytoplasm. Functionally, catalyzes the GTP-dependent ribosomal translocation step during translation elongation. During this step, the ribosome changes from the pre-translocational (PRE) to the post-translocational (POST) state as the newly formed A-site-bound peptidyl-tRNA and P-site-bound deacylated tRNA move to the P and E sites, respectively. Catalyzes the coordinated movement of the two tRNA molecules, the mRNA and conformational changes in the ribosome. The sequence is that of Elongation factor G from Buchnera aphidicola subsp. Acyrthosiphon pisum (strain 5A).